The sequence spans 433 residues: Acetylcholine receptor-like protein cup-4 (433 aa).

A signal peptide spans 1 to 24; sequence MKIIIFVCFILIFYLPIQKKHVNS. N-linked (GlcNAc...) asparagine glycans are attached at residues asparagine 41 and asparagine 68. An intrachain disulfide couples cysteine 178 to cysteine 192. N-linked (GlcNAc...) asparagine glycosylation is found at asparagine 237 and asparagine 249. Helical transmembrane passes span 282-302, 307-327, 337-357, and 413-433; these read EAAV…TFFI, STFL…HDLV, IPFC…TLVL, and PIIG…CLLL.

This sequence belongs to the ligand-gated ion channel (TC 1.A.9) family. Acetylcholine receptor (TC 1.A.9.1) subfamily. As to expression, expressed in coelomocytes.

It is found in the cytoplasmic vesicle membrane. In terms of biological role, thought to regulate endocytosis in coelomocytes through modulation of phospholipase C activity. Possible acetylcholine receptor. This is Acetylcholine receptor-like protein cup-4 (cup-4) from Caenorhabditis elegans.